A 260-amino-acid polypeptide reads, in one-letter code: Winged helix repair factor 1 (260 aa).

Winged helix domain stretches follow at residues 38 to 110 (FTED…MVVM), 126 to 185 (SRAT…LAVP), and 186 to 260 (GAGR…ISET).

The protein belongs to the STK19 family. As to quaternary structure, monomer in solution. Homodimer; when bound to DNA. Component of a transcription-coupled nucleotide excision repair (TC-NER) complex which assembles and interacts with the multiprotein RNA polymerase II complex when it stalls at DNA lesions.

The protein resides in the nucleus. In terms of biological role, DNA-binding protein which is required for efficient transcription-coupled nucleotide excision repair (TC-NER). Acts as part of a TC-NER complex which assembles and interacts with RNA polymerase II (RNAPII) when it stalls at DNA lesions. In Xenopus laevis (African clawed frog), this protein is Winged helix repair factor 1.